We begin with the raw amino-acid sequence, 84 residues long: Toxin CsE9 (84 aa).

Positions 1–19 (MNSLLMITTCLILIGTVLA) are cleaved as a signal peptide. The region spanning 20 to 83 (EDGYLFDKRK…ISRTPGKTCK (64 aa)) is the LCN-type CS-alpha/beta domain. Cystine bridges form between cysteine 31-cysteine 82, cysteine 35-cysteine 58, cysteine 44-cysteine 63, and cysteine 48-cysteine 65.

The protein belongs to the long (4 C-C) scorpion toxin superfamily. Sodium channel inhibitor family. Beta subfamily. In terms of tissue distribution, expressed by the venom gland.

The protein resides in the secreted. Functionally, beta toxins bind voltage-independently at site-4 of sodium channels (Nav) and shift the voltage of activation toward more negative potentials thereby affecting sodium channel activation and promoting spontaneous and repetitive firing. The chain is Toxin CsE9 from Centruroides sculpturatus (Arizona bark scorpion).